The following is an 822-amino-acid chain: MGVQKDSRDIRWNRTTRPLALLLCGLLAFSALSCARTLPEGRKANLAELVSEEEEHFLLDPGNALRLFCDTNQTTIVNWYTESTRLQHGGRIRLTDTVLEIADVTYEDSGLYLCVVPGTGHILRNFTISVVDSLASGDDDDEDHGREDSAGDMGEDPPYSTSYRAPFWSQPQRMDKKLYAVPAGNTVKFRCPSAGNPTPGIRWLKNGREFGGEHRIGGIRLRHQHWSLVMESVVPSDRGNYTCLVENKFGSISYSYLLDVLERSPHRPILQAGLPANTTAMLGSDVQFFCKVYSDAQPHIQWLKHIEVNGSRYGPDGVPFVQVLKTADINSSEVEVLYLHNVSFEDAGEYTCLAGNSIGLSYQSAWLTVLPEEDFAKEAEGPETRYTDIIIYTSGSLALLMAAVIVVLCRMQLPPTKTHLEPATVHKLSRFPLMRQFSLESSSSGKSSTSLVRVTRLSSSCTPMLPGVLEFDLPLDSKWEFPRERLVLGKPLGEGCFGQVVRAEAYGINKDQPDKAITVAIKIVKDKGTDKELSDLISEMELMKLMGKHKNIINLLGVCTQDGPLYMIVEYASKGNLREFLRARRPPSPDYTFDMTKVPEEQLSFQDLVSCSYQVARGMAYLESKRCIHRDLAARNVLVTGENVMKIADFGLARGVHDIDYYKKTSNGRLPVKWMAPEALFDRVYTHQSDVWSFGVLTWEIFTLGGSPYPGIPVEELFKLLREGHRMDKPSNCTHELYMLMRECWHAAPSQRPTFKQLVETLDRILATVAEEYLDLSMPFEQYSPACEDTTSTCSSDDSVFTHEPDVPSLFTHHTTTSMVGT.

A signal peptide spans 1 to 35 (MGVQKDSRDIRWNRTTRPLALLLCGLLAFSALSCA). Residues N13, N72, and N125 are each glycosylated (N-linked (GlcNAc...) asparagine). The Extracellular segment spans residues 36–388 (RTLPEGRKAN…AEGPETRYTD (353 aa)). Ig-like C2-type domains are found at residues 39–129 (PEGR…FTIS), 157–259 (PPYS…YLLD), and 268–368 (PILQ…AWLT). C69 and C114 are joined by a disulfide. The tract at residues 136–166 (SGDDDDEDHGREDSAGDMGEDPPYSTSYRAP) is disordered. Cysteines 191 and 243 form a disulfide. Residues N240, N277, N309, N330, and N341 are each glycosylated (N-linked (GlcNAc...) asparagine). C290 and C352 are joined by a disulfide. A helical membrane pass occupies residues 389–409 (IIIYTSGSLALLMAAVIVVLC). Residues 410-822 (RMQLPPTKTH…HHTTTSMVGT (413 aa)) lie on the Cytoplasmic side of the membrane. A Protein kinase domain is found at 486–774 (LVLGKPLGEG…ILATVAEEYL (289 aa)). ATP is bound by residues 492-500 (LGEGCFGQV) and K522. The Proton acceptor role is filled by D631. 3 positions are modified to phosphotyrosine; by autocatalysis: Y661, Y662, and Y773.

Belongs to the protein kinase superfamily. Tyr protein kinase family. Fibroblast growth factor receptor subfamily. Ubiquitinated. Subject to proteasomal degradation when not fully glycosylated. In terms of processing, autophosphorylated. Binding of FGF family members together with heparan sulfate proteoglycan or heparin promotes receptor dimerization and autophosphorylation on tyrosine residues. Autophosphorylation occurs in trans between the two FGFR molecules present in the dimer.

It is found in the cell membrane. The protein resides in the endosome. Its subcellular location is the endoplasmic reticulum. It catalyses the reaction L-tyrosyl-[protein] + ATP = O-phospho-L-tyrosyl-[protein] + ADP + H(+). Present in an inactive conformation in the absence of bound ligand. Ligand binding leads to dimerization and activation by autophosphorylation on tyrosine residues. Tyrosine-protein kinase that acts as a cell-surface receptor for fibroblast growth factors and plays a role in the regulation of cell proliferation, differentiation and migration, and in regulation of lipid metabolism, bile acid biosynthesis, glucose uptake, vitamin D metabolism and phosphate homeostasis. Required for normal down-regulation of the expression of CYP7A1, the rate-limiting enzyme in bile acid synthesis, in response to FGF19. Phosphorylates PLCG1 and FRS2. Ligand binding leads to the activation of several signaling cascades. Activation of PLCG1 leads to the production of the cellular signaling molecules diacylglycerol and inositol 1,4,5-trisphosphate. Phosphorylation of FRS2 triggers recruitment of GRB2, GAB1, PIK3R1 and SOS1, and mediates activation of RAS, MAPK1/ERK2, MAPK3/ERK1 and the MAP kinase signaling pathway, as well as of the AKT1 signaling pathway. This Pleurodeles waltl (Iberian ribbed newt) protein is Fibroblast growth factor receptor 4 (FGFR4).